Consider the following 73-residue polypeptide: Ubiquitin-like modifier HUB1 (73 aa).

Residues 1–73 form the Ubiquitin-like domain; the sequence is MIEVVVNDRL…DQTNLELYYL (73 aa).

Its function is as follows. Forms conjugate with SPH1 and HBT1. Involved in morphogenesis. In Saccharomyces cerevisiae (strain ATCC 204508 / S288c) (Baker's yeast), this protein is Ubiquitin-like modifier HUB1 (HUB1).